The primary structure comprises 390 residues: Nucleotide-sugar uncharacterized transporter 1 (390 aa).

Transmembrane regions (helical) follow at residues Ile61–Met81, Ile89–Met109, Ser128–Val148, Val155–Leu175, Ser182–Val201, Phe206–Trp228, Ile249–Phe269, Ala278–Gly298, Val306–Ser326, and Gly329–Leu349. Low complexity predominate over residues Leu356–Leu365. The interval Leu356 to Val390 is disordered. Positions Ser366 to Leu382 are enriched in basic and acidic residues.

Belongs to the TPT transporter family. TPT (TC 2.A.7.9) subfamily.

The protein resides in the membrane. The polypeptide is Nucleotide-sugar uncharacterized transporter 1 (Arabidopsis thaliana (Mouse-ear cress)).